The sequence spans 132 residues: Small ribosomal subunit protein uS11 (132 aa).

This sequence belongs to the universal ribosomal protein uS11 family. In terms of assembly, part of the 30S ribosomal subunit. Interacts with proteins S7 and S18. Binds to IF-3.

Located on the platform of the 30S subunit, it bridges several disparate RNA helices of the 16S rRNA. Forms part of the Shine-Dalgarno cleft in the 70S ribosome. This is Small ribosomal subunit protein uS11 from Chlamydia caviae (strain ATCC VR-813 / DSM 19441 / 03DC25 / GPIC) (Chlamydophila caviae).